The primary structure comprises 295 residues: Pyridoxal 5'-phosphate synthase subunit PdxS (295 aa).

Position 25 (Asp25) interacts with D-ribose 5-phosphate. Lys82 (schiff-base intermediate with D-ribose 5-phosphate) is an active-site residue. Residue Gly154 coordinates D-ribose 5-phosphate. Arg166 is a D-glyceraldehyde 3-phosphate binding site. D-ribose 5-phosphate-binding positions include Gly215 and 236 to 237; that span reads GS.

The protein belongs to the PdxS/SNZ family. As to quaternary structure, in the presence of PdxT, forms a dodecamer of heterodimers.

It catalyses the reaction aldehydo-D-ribose 5-phosphate + D-glyceraldehyde 3-phosphate + L-glutamine = pyridoxal 5'-phosphate + L-glutamate + phosphate + 3 H2O + H(+). The protein operates within cofactor biosynthesis; pyridoxal 5'-phosphate biosynthesis. Its function is as follows. Catalyzes the formation of pyridoxal 5'-phosphate from ribose 5-phosphate (RBP), glyceraldehyde 3-phosphate (G3P) and ammonia. The ammonia is provided by the PdxT subunit. Can also use ribulose 5-phosphate and dihydroxyacetone phosphate as substrates, resulting from enzyme-catalyzed isomerization of RBP and G3P, respectively. This chain is Pyridoxal 5'-phosphate synthase subunit PdxS, found in Actinobacillus pleuropneumoniae serotype 5b (strain L20).